A 129-amino-acid chain; its full sequence is Putative pre-16S rRNA nuclease (129 aa).

The protein belongs to the YqgF nuclease family.

It localises to the cytoplasm. In terms of biological role, could be a nuclease involved in processing of the 5'-end of pre-16S rRNA. This Campylobacter jejuni subsp. doylei (strain ATCC BAA-1458 / RM4099 / 269.97) protein is Putative pre-16S rRNA nuclease.